The following is a 202-amino-acid chain: Peptide deformylase (202 aa).

The interval 1-24 (MAGSFAQLAKNAEKKKPSISVSKE) is disordered. Positions 121 and 163 each coordinate Fe cation. The active site involves Glu164. His167 lines the Fe cation pocket.

The protein belongs to the polypeptide deformylase family. Fe(2+) is required as a cofactor.

It catalyses the reaction N-terminal N-formyl-L-methionyl-[peptide] + H2O = N-terminal L-methionyl-[peptide] + formate. In terms of biological role, removes the formyl group from the N-terminal Met of newly synthesized proteins. Requires at least a dipeptide for an efficient rate of reaction. N-terminal L-methionine is a prerequisite for activity but the enzyme has broad specificity at other positions. The protein is Peptide deformylase of Prochlorococcus marinus (strain NATL1A).